The chain runs to 420 residues: MHVLSVSEINVQIKALLEATFLQVRVQGEVSNLTIHKVSGHAYFSLKDSQSVIRCVLFKGNANRLKFALKEGQEMVVFGGISVYVPRGDYQINCFEIEPKEIGSLTLALEQLKEKLRLKGYFDEANKLPKPHFPKRVAVITSQNSAAWADMKKIASKRWPMCELVCINTLMQGEGCVQSVVESIAYADSFHDTKNAFDAIVVARGGGSMEDLYSFNDEKIADALYLAKTFSMSAIGHESDFLLSDLVADLRASTPSNAMEILLPNSDEWLQRLDGFNVKLCRSFKTLLHQKKVHLEHLAASLKRLSFENKHHLNALKLEKLTIALENKTLEFLRLKKTLLEKISIQTLTSPFLQTKTERLNRLENALKLAHANLKLPQFGALVSKNNQAVELEVLKAGDKIELSNEKARASAEILSVDRV.

Belongs to the XseA family. Heterooligomer composed of large and small subunits.

The protein resides in the cytoplasm. The enzyme catalyses Exonucleolytic cleavage in either 5'- to 3'- or 3'- to 5'-direction to yield nucleoside 5'-phosphates.. Bidirectionally degrades single-stranded DNA into large acid-insoluble oligonucleotides, which are then degraded further into small acid-soluble oligonucleotides. The chain is Exodeoxyribonuclease 7 large subunit from Helicobacter pylori (strain G27).